Reading from the N-terminus, the 263-residue chain is Small ribosomal subunit protein uS2 (263 aa).

This sequence belongs to the universal ribosomal protein uS2 family. Component of the small ribosomal subunit. Mature ribosomes consist of a small (40S) and a large (60S) subunit. The 40S subunit contains about 33 different proteins and 1 molecule of RNA (18S). The 60S subunit contains about 49 different proteins and 3 molecules of RNA (25S, 5.8S and 5S). Interacts with RPS21.

It localises to the cytoplasm. Functionally, required for the assembly and/or stability of the 40S ribosomal subunit. Required for the processing of the 20S rRNA-precursor to mature 18S rRNA in a late step of the maturation of 40S ribosomal subunits. The protein is Small ribosomal subunit protein uS2 of Vairimorpha ceranae (strain BRL01) (Microsporidian parasite).